A 402-amino-acid chain; its full sequence is MSKEKIVLAYSGGLDTSIILKWLQTERNYDVVCFTADLGQGDEVEEARVKALNTGAVAAYALDLREEFVRDYVFPMMRSSALYEGYYLLGTSIARPLIAKKMVEIAEKEGAVAISHGATGKGNDQVRFEMSAYALKPDIVTVAPWRDWDFQGRADLEAFAREHGIPVPTTKKDPWSMDANMLHISYEGGPLEDPWTEPPTHMFKLTVNPEDAPSEAEYVEIEYVNGDPVSINGEQLSPAALLTKANEIAGRHGVGRIDLVENRFVGMKSRGVYETPGGTLLYHARRAVESLTLDREVLHQRDALGPKYAELVYNGFWFAPEREALQVYFDHVAKSVTGTARLKLYKGNCIVAGRKAERSLYDKDLVSFEAGGDYNQHDAGAFIKLNSLRMRVQKRVEDKGKK.

Residues 9–17 and A36 each bind ATP; that span reads AYSGGLDTS. L-citrulline-binding residues include Y87 and S92. G117 lines the ATP pocket. L-aspartate contacts are provided by T119, N123, and D124. N123 contributes to the L-citrulline binding site. L-citrulline contacts are provided by R127, S176, S185, E261, and Y273.

This sequence belongs to the argininosuccinate synthase family. Type 1 subfamily. As to quaternary structure, homotetramer.

The protein localises to the cytoplasm. It catalyses the reaction L-citrulline + L-aspartate + ATP = 2-(N(omega)-L-arginino)succinate + AMP + diphosphate + H(+). It functions in the pathway amino-acid biosynthesis; L-arginine biosynthesis; L-arginine from L-ornithine and carbamoyl phosphate: step 2/3. The chain is Argininosuccinate synthase from Deinococcus radiodurans (strain ATCC 13939 / DSM 20539 / JCM 16871 / CCUG 27074 / LMG 4051 / NBRC 15346 / NCIMB 9279 / VKM B-1422 / R1).